Here is a 103-residue protein sequence, read N- to C-terminus: Large ribosomal subunit protein bL21 (103 aa).

It belongs to the bacterial ribosomal protein bL21 family. As to quaternary structure, part of the 50S ribosomal subunit. Contacts protein L20.

This protein binds to 23S rRNA in the presence of protein L20. This is Large ribosomal subunit protein bL21 from Acinetobacter baylyi (strain ATCC 33305 / BD413 / ADP1).